A 166-amino-acid chain; its full sequence is Lipoprotein signal peptidase (166 aa).

4 consecutive transmembrane segments (helical) span residues 9 to 29 (ASGA…FDQL), 45 to 65 (ALTS…FGFL), 71 to 91 (WQRW…CFLL), and 100 to 120 (FSVS…DRLV). Residues aspartate 126 and aspartate 144 contribute to the active site. Residues 135–155 (WHFPAFNLADSAITVGAVLLI) form a helical membrane-spanning segment.

This sequence belongs to the peptidase A8 family.

Its subcellular location is the cell inner membrane. It catalyses the reaction Release of signal peptides from bacterial membrane prolipoproteins. Hydrolyzes -Xaa-Yaa-Zaa-|-(S,diacylglyceryl)Cys-, in which Xaa is hydrophobic (preferably Leu), and Yaa (Ala or Ser) and Zaa (Gly or Ala) have small, neutral side chains.. Its pathway is protein modification; lipoprotein biosynthesis (signal peptide cleavage). Its function is as follows. This protein specifically catalyzes the removal of signal peptides from prolipoproteins. This chain is Lipoprotein signal peptidase, found in Burkholderia cenocepacia (strain HI2424).